Reading from the N-terminus, the 743-residue chain is POU domain, class 2, transcription factor 1 (743 aa).

Polar residues predominate over residues 1-11; it reads MNNPSETSKPS. 4 disordered regions span residues 1-34, 67-95, 258-283, and 357-381; these read MNNP…QPVP, SLNV…SVQA, ATPI…EEPS, and SSDS…RRRK. Positions 81–95 are enriched in low complexity; the sequence is SQQPSQPSQQPSVQA. A phosphothreonine mark is found at Thr-270 and Thr-276. In terms of domain architecture, POU-specific spans 280–354; it reads EEPSDLEELE…LLEKWLNDAE (75 aa). Ser-283 bears the Phosphoserine mark. Positions 357–371 are enriched in low complexity; sequence SSDSSLSSPSALNSP. Residues 379 to 438 constitute a DNA-binding region (homeobox); it reads RRKKRTSIETNIRVALEKSFLENQKPTSEEITMIADQLNMEKEVIRVWFCNRRQKEKRIN. 2 positions are modified to phosphoserine: Ser-385 and Ser-448. Residues 494–504 show a composition bias toward polar residues; that stretch reads VTGTSDTTSNN. The disordered stretch occupies residues 494–557; the sequence is VTGTSDTTSN…TTSTPLSSPL (64 aa). Over residues 505–557 the composition is skewed to low complexity; sequence TATVISTAPPASSAVTSPSLSPSPSASASTSEASSASETSTTQTTSTPLSSPL.

It belongs to the POU transcription factor family. Class-2 subfamily. As to quaternary structure, interacts with POU2AF1; the interaction increases POU2F1 transactivation activity. Interacts with NR3C1, AR, PGR and HCFC1. In terms of assembly, (Microbial infection) Associates with the herpes simplex virus VP16-induced complex; binding to HCFC1 activates the viral transcriptional activator VP16 for association with POU2F1, to form a multiprotein-DNA complex responsible for activating transcription of the viral immediate early genes. (Microbial infection) Interacts with human herpesvirus 8 (KSHV) protein RTA/ORF50; this interaction enhances RTA/ORF50-mediated transactivation of several viral promoters including K-bZIP promoter. Post-translationally, phosphorylated by PRKDC. As to expression, ubiquitous. Isoform 2 is lymphocyte-specific.

It localises to the nucleus. In terms of biological role, transcription factor that binds to the octamer motif (5'-ATTTGCAT-3') and activates the promoters of the genes for some small nuclear RNAs (snRNA) and of genes such as those for histone H2B and immunoglobulins. Modulates transcription transactivation by NR3C1, AR and PGR. (Microbial infection) In case of human herpes simplex virus (HSV) infection, POU2F1 forms a multiprotein-DNA complex with the viral transactivator protein VP16 and HCFC1 thereby enabling the transcription of the viral immediate early genes. This Homo sapiens (Human) protein is POU domain, class 2, transcription factor 1 (POU2F1).